The chain runs to 477 residues: Bifunctional protein HldE (477 aa).

Positions Met1 to Thr318 are ribokinase. Asn195–Glu198 lines the ATP pocket. Residue Asp264 is part of the active site. The interval Met344–Lys477 is cytidylyltransferase.

In the N-terminal section; belongs to the carbohydrate kinase PfkB family. It in the C-terminal section; belongs to the cytidylyltransferase family. Homodimer.

It catalyses the reaction D-glycero-beta-D-manno-heptose 7-phosphate + ATP = D-glycero-beta-D-manno-heptose 1,7-bisphosphate + ADP + H(+). The catalysed reaction is D-glycero-beta-D-manno-heptose 1-phosphate + ATP + H(+) = ADP-D-glycero-beta-D-manno-heptose + diphosphate. It participates in nucleotide-sugar biosynthesis; ADP-L-glycero-beta-D-manno-heptose biosynthesis; ADP-L-glycero-beta-D-manno-heptose from D-glycero-beta-D-manno-heptose 7-phosphate: step 1/4. Its pathway is nucleotide-sugar biosynthesis; ADP-L-glycero-beta-D-manno-heptose biosynthesis; ADP-L-glycero-beta-D-manno-heptose from D-glycero-beta-D-manno-heptose 7-phosphate: step 3/4. Its function is as follows. Catalyzes the phosphorylation of D-glycero-D-manno-heptose 7-phosphate at the C-1 position to selectively form D-glycero-beta-D-manno-heptose-1,7-bisphosphate. In terms of biological role, catalyzes the ADP transfer from ATP to D-glycero-beta-D-manno-heptose 1-phosphate, yielding ADP-D-glycero-beta-D-manno-heptose. This chain is Bifunctional protein HldE, found in Salmonella dublin (strain CT_02021853).